The chain runs to 951 residues: MIGALARKFFGSANDRRVKGYQARVKAINGLEPEIAALSDEALRARTAEFRQQLADGKTLDDILVPAFATVREAGKRTLGQRHFDVQLIGGMVLHEGDIAEMKTGEGKTLVATLAVYLNALAGKGVHVVTVNDYLASRDAGWMAQIYTFLGLTTGVIVHGLDDVERKAAYACDITYGTNNEYGFDYLRDNMKYRLEDMVQREHFYAIVDEVDSILIDEARTPLIISGPLDDRSEFYNTIDTFMPNLEKVADYEVDEKQRTVALTEAGMEKIETLLRDAGQLKGDSLYDVENVSVVHHINQALRAHSLFTRDKDYIVRDDEVVIIDEFTGRMMQGRRYSEGLHQALEAKEHVTVQPENQTLASITFQNYFRMYKKLSGMTGTALTEADELADIYKLEVVEIPTNLPIARLDEDDEVYRTQNEKYAAILAEVERANARMQPVLVGTASIEKSEVLADYLKKNGYKLIDFGDPKSMRKLYAAARAGKPAKLFAVLNARFHEQEAYIVAEAGVPGAITIATNMAGRGTDIKLGGSLEMRAQFETADLADEAEKDAKIAEIKADIERFRDMVLKAEDVVEIEPAKGSKPAKTVTRPGGLYIIGSERHESRRIDNQLRGRSGRQGDPGRSKFFLSLEDDLMRIFGSDRLDTMLQRLGLKDGEAITHPWINKALEKAQQKVEARNFDIRKNLLKYDDVQNDQRKVIFDQRVDLMMNESVAETVADMRHAFVDDLVTKHVPENQYAEQWDVAGLKEELRRVLDIDLPVDEWAAEEGIADEELLSRIENRVDEHMAAKVGQWGPDVMRYVEKTILLQTLDHLWREHLVMLDHLRQVIGLRGYGQRDPLQEYKSEAFSLFEALIAHLREAVTGQLMRVEIVPPEEEQPVLPAMEVHKLDPHTGEDEMAFAQGNFAQASLAPVVSADRSSRDPGNPASWGKVGRNEDCPCGSGKKYKHCHGR.

ATP contacts are provided by residues Q87, 105–109 (GEGKT), and D525. Positions 911–942 (PVVSADRSSRDPGNPASWGKVGRNEDCPCGSG) are disordered. C937, C939, C948, and H949 together coordinate Zn(2+).

The protein belongs to the SecA family. As to quaternary structure, monomer and homodimer. Part of the essential Sec protein translocation apparatus which comprises SecA, SecYEG and auxiliary proteins SecDF-YajC and YidC. The cofactor is Zn(2+).

Its subcellular location is the cell inner membrane. It localises to the cytoplasm. The catalysed reaction is ATP + H2O + cellular proteinSide 1 = ADP + phosphate + cellular proteinSide 2.. In terms of biological role, part of the Sec protein translocase complex. Interacts with the SecYEG preprotein conducting channel. Has a central role in coupling the hydrolysis of ATP to the transfer of proteins into and across the cell membrane, serving both as a receptor for the preprotein-SecB complex and as an ATP-driven molecular motor driving the stepwise translocation of polypeptide chains across the membrane. The polypeptide is Protein translocase subunit SecA 1 (Nitrobacter hamburgensis (strain DSM 10229 / NCIMB 13809 / X14)).